The following is a 123-amino-acid chain: uncharacterized protein (123 aa).

An N-terminal signal peptide occupies residues 1–20 (MARTLALRASAGLVAGMAMA).

This is an uncharacterized protein from Mycobacterium bovis (strain ATCC BAA-935 / AF2122/97).